Consider the following 507-residue polypeptide: Glycerol kinase (507 aa).

Thr15 contacts ADP. Positions 15, 16, and 17 each coordinate ATP. Thr15 contacts sn-glycerol 3-phosphate. An ADP-binding site is contributed by Arg19. Sn-glycerol 3-phosphate-binding residues include Arg85, Glu86, Tyr137, and Asp250. 5 residues coordinate glycerol: Arg85, Glu86, Tyr137, Asp250, and Gln251. Residues Thr272 and Gly316 each contribute to the ADP site. ATP contacts are provided by Thr272, Gly316, Gln320, and Gly417. Gly417 provides a ligand contact to ADP.

This sequence belongs to the FGGY kinase family.

The enzyme catalyses glycerol + ATP = sn-glycerol 3-phosphate + ADP + H(+). Its pathway is polyol metabolism; glycerol degradation via glycerol kinase pathway; sn-glycerol 3-phosphate from glycerol: step 1/1. Its activity is regulated as follows. Inhibited by fructose 1,6-bisphosphate (FBP). Functionally, key enzyme in the regulation of glycerol uptake and metabolism. Catalyzes the phosphorylation of glycerol to yield sn-glycerol 3-phosphate. The polypeptide is Glycerol kinase (Mycoplasmopsis pulmonis (strain UAB CTIP) (Mycoplasma pulmonis)).